The sequence spans 697 residues: Lebercilin (697 aa).

The disordered stretch occupies residues Met-1 to Arg-90. Phosphoserine is present on residues Ser-7 and Ser-45. Over residues Ser-32–Ser-45 the composition is skewed to low complexity. 2 coiled-coil regions span residues Arg-103–Ile-297 and Glu-389–Lys-485. Disordered stretches follow at residues Trp-412–Glu-432, His-522–Pro-548, and Glu-606–Arg-697. A compositionally biased stretch (basic and acidic residues) spans Glu-416 to Glu-432. Positions Ile-527–Ser-547 are enriched in polar residues. The span at Ser-612–Ser-626 shows a compositional bias: low complexity. A compositionally biased stretch (acidic residues) spans Ser-686–Arg-697.

This sequence belongs to the LCA5 family. In terms of assembly, interacts with NINL. Interacts with OFD1. Interacts with FAM161A. Interacts with components of the IFT complex B. As to expression, widely expressed.

It localises to the cytoplasm. Its subcellular location is the cytoskeleton. It is found in the cilium axoneme. The protein localises to the cilium basal body. The protein resides in the microtubule organizing center. It localises to the centrosome. Its subcellular location is the cell projection. It is found in the cilium. In terms of biological role, involved in intraflagellar protein (IFT) transport in photoreceptor cilia. In Homo sapiens (Human), this protein is Lebercilin (LCA5).